The primary structure comprises 526 residues: ATP synthase subunit alpha (526 aa).

Residue Gly171–Thr178 participates in ATP binding.

This sequence belongs to the ATPase alpha/beta chains family. As to quaternary structure, F-type ATPases have 2 components, CF(1) - the catalytic core - and CF(0) - the membrane proton channel. CF(1) has five subunits: alpha(3), beta(3), gamma(1), delta(1), epsilon(1). CF(0) has four main subunits: a(1), b(1), b'(1) and c(9-12).

Its subcellular location is the cell inner membrane. The enzyme catalyses ATP + H2O + 4 H(+)(in) = ADP + phosphate + 5 H(+)(out). Its function is as follows. Produces ATP from ADP in the presence of a proton gradient across the membrane. The alpha chain is a regulatory subunit. The protein is ATP synthase subunit alpha of Chlorobaculum tepidum (strain ATCC 49652 / DSM 12025 / NBRC 103806 / TLS) (Chlorobium tepidum).